The sequence spans 130 residues: uncharacterized protein (130 aa).

Residues methionine 1–alanine 34 are disordered.

The protein to M.tuberculosis Rv1583c.

This is an uncharacterized protein from Mycobacterium tuberculosis (strain CDC 1551 / Oshkosh).